The primary structure comprises 252 residues: Transcription factor bHLH117 (252 aa).

The interval 103-141 is disordered; that stretch reads LFPSLSPPLPAAKRQKLNSTSSSTTSGSPTASNDGGIIT. The segment covering 121 to 134 has biased composition (low complexity); sequence STSSSTTSGSPTAS. The bHLH domain maps to 130–179; it reads SPTASNDGGIITKRRKISDKIRSLEKLMPWERKMNLAMTLEESHKYIKFL.

In terms of assembly, homodimer.

It localises to the nucleus. This Arabidopsis thaliana (Mouse-ear cress) protein is Transcription factor bHLH117 (BHLH117).